A 1067-amino-acid polypeptide reads, in one-letter code: Kinesin-like protein KIF11 (1067 aa).

In terms of domain architecture, Kinesin motor spans 18 to 359 (NIQVVVRCRP…LEYANRAKNI (342 aa)). ATP is bound at residue 105 to 112 (GQTGTGKT). Residues 365 to 480 (VNQKLTKRAL…SKEQLAQEAF (116 aa)) are a coiled coil. Thr-937 is modified (phosphothreonine; by CDK1). Ser-1046 carries the phosphoserine; by NEK6 modification. Positions 1048–1067 (IMDEAEQSLPKSKLPLRMQN) are disordered.

This sequence belongs to the TRAFAC class myosin-kinesin ATPase superfamily. Kinesin family. BimC subfamily. In terms of assembly, heterotetramer of two heavy and two light chains. Interacts with aurka. Post-translationally, phosphorylation of Thr-937 during mitosis controls the association of this protein with the spindle apparatus. In terms of processing, a subset of this protein primarily localized at the spindle pole is phosphorylated by NEK6 during mitosis. Phosphorylated on a serine residue by aurka.

The protein localises to the cytoplasm. It is found in the cytoskeleton. The protein resides in the spindle pole. In terms of biological role, plus end-directed motor protein required for establishing a bipolar spindle. Associates with both interphase and mitotic spindle microtubules. May be involved in nuclear divisions taking place during the development of unfertilized eggs. Required in non-mitotic cells for transport of secretory proteins from the Golgi complex to the cell surface. The polypeptide is Kinesin-like protein KIF11 (Xenopus tropicalis (Western clawed frog)).